Consider the following 475-residue polypeptide: 3-keto-steroid reductase ERG27 (475 aa).

Positions 32, 55, 59, and 65 each coordinate NADP(+). Catalysis depends on proton donor residues Ser-249 and Tyr-272. The NADP(+) site is built by Tyr-272, Lys-276, Val-324, and Ser-326. The active-site Lowers pKa of active site Tyr is the Lys-276.

The protein belongs to the short-chain dehydrogenases/reductases (SDR) family. ERG27 subfamily. In terms of assembly, heterotetramer of ERG25, ERG26, ERG27 and ERG28. ERG28 acts as a scaffold to tether ERG27 and other 4,4-demethylation-related enzymes, forming a demethylation enzyme complex, in the endoplasmic reticulum.

Its subcellular location is the endoplasmic reticulum membrane. The protein localises to the lipid droplet. The protein operates within steroid metabolism; ergosterol biosynthesis. In terms of biological role, 3-keto-steroid reductase; part of the third module of ergosterol biosynthesis pathway that includes the late steps of the pathway. ERG27 is a catalytic component of the C-4 demethylation complex that catalyzes the conversion of 4,4-dimethylfecosterol into fecosterol via 4-methylfecosterol. The third module or late pathway involves the ergosterol synthesis itself through consecutive reactions that mainly occur in the endoplasmic reticulum (ER) membrane. Firstly, the squalene synthase ERG9 catalyzes the condensation of 2 farnesyl pyrophosphate moieties to form squalene, which is the precursor of all steroids. Squalene synthase is crucial for balancing the incorporation of farnesyl diphosphate (FPP) into sterol and nonsterol isoprene synthesis. Secondly, squalene is converted into lanosterol by the consecutive action of the squalene epoxidase ERG1 and the lanosterol synthase ERG7. Then, the delta(24)-sterol C-methyltransferase ERG6 methylates lanosterol at C-24 to produce eburicol. Eburicol is the substrate of the sterol 14-alpha demethylase encoded by CYP51A, CYP51B and CYP51C, to yield 4,4,24-trimethyl ergosta-8,14,24(28)-trienol. CYP51B encodes the enzyme primarily responsible for sterol 14-alpha-demethylation, and plays an essential role in ascospore formation. CYP51A encodes an additional sterol 14-alpha-demethylase, induced on ergosterol depletion and responsible for the intrinsic variation in azole sensitivity. The third CYP51 isoform, CYP51C, does not encode a sterol 14-alpha-demethylase, but is required for full virulence on host wheat ears. The C-14 reductase ERG24 then reduces the C14=C15 double bond which leads to 4,4-dimethylfecosterol. A sequence of further demethylations at C-4, involving the C-4 demethylation complex containing the C-4 methylsterol oxidases ERG25, the sterol-4-alpha-carboxylate 3-dehydrogenase ERG26 and the 3-keto-steroid reductase ERG27, leads to the production of fecosterol via 4-methylfecosterol. ERG28 has a role as a scaffold to help anchor ERG25, ERG26 and ERG27 to the endoplasmic reticulum. The C-8 sterol isomerase ERG2 then catalyzes the reaction which results in unsaturation at C-7 in the B ring of sterols and thus converts fecosterol to episterol. The sterol-C5-desaturases ERG3A and ERG3BB then catalyze the introduction of a C-5 double bond in the B ring to produce 5-dehydroepisterol. The C-22 sterol desaturases ERG5A and ERG5B further convert 5-dehydroepisterol into ergosta-5,7,22,24(28)-tetraen-3beta-ol by forming the C-22(23) double bond in the sterol side chain. Finally, ergosta-5,7,22,24(28)-tetraen-3beta-ol is substrate of the C-24(28) sterol reductase ERG4 to produce ergosterol. This is 3-keto-steroid reductase ERG27 from Gibberella zeae (strain ATCC MYA-4620 / CBS 123657 / FGSC 9075 / NRRL 31084 / PH-1) (Wheat head blight fungus).